Reading from the N-terminus, the 350-residue chain is Hydroxymethylglutaryl-CoA synthase (350 aa).

The Proton donor/acceptor role is filled by Glu-83. Cys-115 acts as the Acyl-thioester intermediate in catalysis. (3S)-3-hydroxy-3-methylglutaryl-CoA contacts are provided by Cys-115 and Thr-156. Arg-204 is a CoA binding site. Thr-206 and His-239 together coordinate (3S)-3-hydroxy-3-methylglutaryl-CoA. The Proton donor/acceptor role is filled by His-239. Lys-244 serves as a coordination point for CoA. Residues Asn-271 and Ser-301 each coordinate (3S)-3-hydroxy-3-methylglutaryl-CoA.

This sequence belongs to the thiolase-like superfamily. Archaeal HMG-CoA synthase family. As to quaternary structure, interacts with acetoacetyl-CoA thiolase that catalyzes the precedent step in the pathway and with a DUF35 protein. The acetoacetyl-CoA thiolase/HMG-CoA synthase complex channels the intermediate via a fused CoA-binding site, which allows for efficient coupling of the endergonic thiolase reaction with the exergonic HMGCS reaction.

It carries out the reaction acetoacetyl-CoA + acetyl-CoA + H2O = (3S)-3-hydroxy-3-methylglutaryl-CoA + CoA + H(+). It functions in the pathway metabolic intermediate biosynthesis; (R)-mevalonate biosynthesis; (R)-mevalonate from acetyl-CoA: step 2/3. Its function is as follows. Catalyzes the condensation of acetyl-CoA with acetoacetyl-CoA to form 3-hydroxy-3-methylglutaryl-CoA (HMG-CoA). Functions in the mevalonate (MVA) pathway leading to isopentenyl diphosphate (IPP), a key precursor for the biosynthesis of isoprenoid compounds that are building blocks of archaeal membrane lipids. The polypeptide is Hydroxymethylglutaryl-CoA synthase (Thermococcus gammatolerans (strain DSM 15229 / JCM 11827 / EJ3)).